A 677-amino-acid polypeptide reads, in one-letter code: UvrABC system protein B (677 aa).

The 389-residue stretch at 26-414 folds into the Helicase ATP-binding domain; the sequence is DNLDAGLAHQ…SGNEVVEQVV (389 aa). 39 to 46 serves as a coordination point for ATP; the sequence is GVTGSGKT. The Beta-hairpin motif lies at 92-115; sequence YYDYYQPEAYVPTTDTFIEKDASI. In terms of domain architecture, Helicase C-terminal spans 432–598; sequence QVDDLMSEIR…GLNKDITDVM (167 aa). A UVR domain is found at 637-672; it reads MKEIDAKEKEMYKAAQNLEFEQAGKLRDEVAELREQ.

It belongs to the UvrB family. As to quaternary structure, forms a heterotetramer with UvrA during the search for lesions. Interacts with UvrC in an incision complex.

Its subcellular location is the cytoplasm. Its function is as follows. The UvrABC repair system catalyzes the recognition and processing of DNA lesions. A damage recognition complex composed of 2 UvrA and 2 UvrB subunits scans DNA for abnormalities. Upon binding of the UvrA(2)B(2) complex to a putative damaged site, the DNA wraps around one UvrB monomer. DNA wrap is dependent on ATP binding by UvrB and probably causes local melting of the DNA helix, facilitating insertion of UvrB beta-hairpin between the DNA strands. Then UvrB probes one DNA strand for the presence of a lesion. If a lesion is found the UvrA subunits dissociate and the UvrB-DNA preincision complex is formed. This complex is subsequently bound by UvrC and the second UvrB is released. If no lesion is found, the DNA wraps around the other UvrB subunit that will check the other stand for damage. The chain is UvrABC system protein B from Idiomarina loihiensis (strain ATCC BAA-735 / DSM 15497 / L2-TR).